The following is a 199-amino-acid chain: MEVHEVEMVMSAVAASQYPTDQLPEIALSGRSNVGKSSLINKLINRKSYARTSSKPGKTQTLNFYRVENELYFVDVPGYGYAKVSKKQREKFGQIIEAYLTNRDNLRGLISLIDGRHEPTDDDIAMYVFAKYYDIPVLVVATKMDKISTGKWNRQEKIIKEALDFNPVDKFVCFSALTGAGKDTVWEWIEQQCDIGGRR.

The EngB-type G domain maps to 22–195; sequence QLPEIALSGR…WEWIEQQCDI (174 aa). GTP is bound by residues 30 to 37, 57 to 61, 75 to 78, 142 to 145, and 174 to 176; these read GRSNVGKS, GKTQT, DVPG, TKMD, and FSA. S37 and T59 together coordinate Mg(2+).

It belongs to the TRAFAC class TrmE-Era-EngA-EngB-Septin-like GTPase superfamily. EngB GTPase family. Mg(2+) is required as a cofactor.

Necessary for normal cell division and for the maintenance of normal septation. This chain is Probable GTP-binding protein EngB, found in Latilactobacillus sakei subsp. sakei (strain 23K) (Lactobacillus sakei subsp. sakei).